The chain runs to 633 residues: Glutamyl-tRNA(Gln) amidotransferase subunit E (633 aa).

It belongs to the GatB/GatE family. GatE subfamily. Heterodimer of GatD and GatE.

It catalyses the reaction L-glutamyl-tRNA(Gln) + L-glutamine + ATP + H2O = L-glutaminyl-tRNA(Gln) + L-glutamate + ADP + phosphate + H(+). Its function is as follows. Allows the formation of correctly charged Gln-tRNA(Gln) through the transamidation of misacylated Glu-tRNA(Gln) in organisms which lack glutaminyl-tRNA synthetase. The reaction takes place in the presence of glutamine and ATP through an activated gamma-phospho-Glu-tRNA(Gln). The GatDE system is specific for glutamate and does not act on aspartate. The sequence is that of Glutamyl-tRNA(Gln) amidotransferase subunit E from Methanococcus vannielii (strain ATCC 35089 / DSM 1224 / JCM 13029 / OCM 148 / SB).